A 463-amino-acid chain; its full sequence is L-seryl-tRNA(Sec) selenium transferase (463 aa).

Lys-295 is modified (N6-(pyridoxal phosphate)lysine).

This sequence belongs to the SelA family. Homodecamer; pentamer of dimers. Binds only one seryl-tRNA(Sec) per dimer. It depends on pyridoxal 5'-phosphate as a cofactor.

Its subcellular location is the cytoplasm. It carries out the reaction L-seryl-tRNA(Sec) + selenophosphate + H(+) = L-selenocysteinyl-tRNA(Sec) + phosphate. Its pathway is aminoacyl-tRNA biosynthesis; selenocysteinyl-tRNA(Sec) biosynthesis; selenocysteinyl-tRNA(Sec) from L-seryl-tRNA(Sec) (bacterial route): step 1/1. Converts seryl-tRNA(Sec) to selenocysteinyl-tRNA(Sec) required for selenoprotein biosynthesis. The chain is L-seryl-tRNA(Sec) selenium transferase from Shigella dysenteriae serotype 1 (strain Sd197).